Here is a 396-residue protein sequence, read N- to C-terminus: Tryptophan synthase beta chain (396 aa).

Lysine 86 is modified (N6-(pyridoxal phosphate)lysine).

This sequence belongs to the TrpB family. In terms of assembly, tetramer of two alpha and two beta chains. It depends on pyridoxal 5'-phosphate as a cofactor.

The catalysed reaction is (1S,2R)-1-C-(indol-3-yl)glycerol 3-phosphate + L-serine = D-glyceraldehyde 3-phosphate + L-tryptophan + H2O. It functions in the pathway amino-acid biosynthesis; L-tryptophan biosynthesis; L-tryptophan from chorismate: step 5/5. The beta subunit is responsible for the synthesis of L-tryptophan from indole and L-serine. The protein is Tryptophan synthase beta chain of Photobacterium profundum (strain SS9).